We begin with the raw amino-acid sequence, 130 residues long: MTRIRRGYIARRRRTKTRFFASSWRGARGNLTRAIIQQRIRAWFSSHRDRTRQKRDFRRLWITRINAAIRENGRSSIYSKLIHNLYKRQLFLNRKMLAQLAILNRNCLYMISNQILKEVDWQESATILEI.

This sequence belongs to the bacterial ribosomal protein bL20 family.

The protein resides in the plastid. It localises to the chloroplast. Functionally, binds directly to 23S ribosomal RNA and is necessary for the in vitro assembly process of the 50S ribosomal subunit. It is not involved in the protein synthesizing functions of that subunit. The polypeptide is Large ribosomal subunit protein bL20c (Oenothera argillicola (Appalachian evening primrose)).